An 87-amino-acid polypeptide reads, in one-letter code: Small ribosomal subunit protein bS18 (87 aa).

The protein belongs to the bacterial ribosomal protein bS18 family. Part of the 30S ribosomal subunit. Forms a tight heterodimer with protein bS6.

Its function is as follows. Binds as a heterodimer with protein bS6 to the central domain of the 16S rRNA, where it helps stabilize the platform of the 30S subunit. This chain is Small ribosomal subunit protein bS18, found in Nitratidesulfovibrio vulgaris (strain DSM 19637 / Miyazaki F) (Desulfovibrio vulgaris).